Here is a 380-residue protein sequence, read N- to C-terminus: Succinyl-diaminopimelate desuccinylase (380 aa).

His70 contacts Zn(2+). Asp72 is a catalytic residue. Zn(2+) is bound at residue Asp104. The active-site Proton acceptor is Glu138. Residues Glu139, Glu167, and His353 each coordinate Zn(2+).

It belongs to the peptidase M20A family. DapE subfamily. As to quaternary structure, homodimer. It depends on Zn(2+) as a cofactor. The cofactor is Co(2+).

The enzyme catalyses N-succinyl-(2S,6S)-2,6-diaminopimelate + H2O = (2S,6S)-2,6-diaminopimelate + succinate. It functions in the pathway amino-acid biosynthesis; L-lysine biosynthesis via DAP pathway; LL-2,6-diaminopimelate from (S)-tetrahydrodipicolinate (succinylase route): step 3/3. Catalyzes the hydrolysis of N-succinyl-L,L-diaminopimelic acid (SDAP), forming succinate and LL-2,6-diaminopimelate (DAP), an intermediate involved in the bacterial biosynthesis of lysine and meso-diaminopimelic acid, an essential component of bacterial cell walls. In Ectopseudomonas mendocina (strain ymp) (Pseudomonas mendocina), this protein is Succinyl-diaminopimelate desuccinylase.